Reading from the N-terminus, the 489-residue chain is UDP-N-acetylmuramoyl-L-alanyl-D-glutamate--2,6-diaminopimelate ligase (489 aa).

S32 serves as a coordination point for UDP-N-acetyl-alpha-D-muramoyl-L-alanyl-D-glutamate. 113–119 contributes to the ATP binding site; it reads GTNGKTT. UDP-N-acetyl-alpha-D-muramoyl-L-alanyl-D-glutamate contacts are provided by residues 154-155, S181, Q187, and R189; that span reads TT. K221 bears the N6-carboxylysine mark. Meso-2,6-diaminopimelate-binding positions include R381, 405–408, G456, and E460; that span reads DNPR. Positions 405 to 408 match the Meso-diaminopimelate recognition motif motif; that stretch reads DNPR.

This sequence belongs to the MurCDEF family. MurE subfamily. Requires Mg(2+) as cofactor. In terms of processing, carboxylation is probably crucial for Mg(2+) binding and, consequently, for the gamma-phosphate positioning of ATP.

It localises to the cytoplasm. The catalysed reaction is UDP-N-acetyl-alpha-D-muramoyl-L-alanyl-D-glutamate + meso-2,6-diaminopimelate + ATP = UDP-N-acetyl-alpha-D-muramoyl-L-alanyl-gamma-D-glutamyl-meso-2,6-diaminopimelate + ADP + phosphate + H(+). The protein operates within cell wall biogenesis; peptidoglycan biosynthesis. Catalyzes the addition of meso-diaminopimelic acid to the nucleotide precursor UDP-N-acetylmuramoyl-L-alanyl-D-glutamate (UMAG) in the biosynthesis of bacterial cell-wall peptidoglycan. The chain is UDP-N-acetylmuramoyl-L-alanyl-D-glutamate--2,6-diaminopimelate ligase from Gloeobacter violaceus (strain ATCC 29082 / PCC 7421).